Consider the following 267-residue polypeptide: Hydroxyethylthiazole kinase (267 aa).

Met46 provides a ligand contact to substrate. 2 residues coordinate ATP: Arg122 and Ser168. Gly195 provides a ligand contact to substrate.

Belongs to the Thz kinase family. Mg(2+) is required as a cofactor.

It catalyses the reaction 5-(2-hydroxyethyl)-4-methylthiazole + ATP = 4-methyl-5-(2-phosphooxyethyl)-thiazole + ADP + H(+). It participates in cofactor biosynthesis; thiamine diphosphate biosynthesis; 4-methyl-5-(2-phosphoethyl)-thiazole from 5-(2-hydroxyethyl)-4-methylthiazole: step 1/1. Catalyzes the phosphorylation of the hydroxyl group of 4-methyl-5-beta-hydroxyethylthiazole (THZ). In Nitratidesulfovibrio vulgaris (strain DP4) (Desulfovibrio vulgaris), this protein is Hydroxyethylthiazole kinase.